Consider the following 341-residue polypeptide: Anthranilate phosphoribosyltransferase (341 aa).

5-phospho-alpha-D-ribose 1-diphosphate-binding positions include Gly-84, 87–88, Thr-92, 94–97, 112–120, and Ser-124; these read GD, NIST, and KHGNRSVSS. An anthranilate-binding site is contributed by Gly-84. Mg(2+) is bound at residue Ser-96. An anthranilate-binding site is contributed by Asn-115. Arg-170 is a binding site for anthranilate. The Mg(2+) site is built by Asp-229 and Glu-230.

It belongs to the anthranilate phosphoribosyltransferase family. Homodimer. It depends on Mg(2+) as a cofactor.

The enzyme catalyses N-(5-phospho-beta-D-ribosyl)anthranilate + diphosphate = 5-phospho-alpha-D-ribose 1-diphosphate + anthranilate. It participates in amino-acid biosynthesis; L-tryptophan biosynthesis; L-tryptophan from chorismate: step 2/5. Catalyzes the transfer of the phosphoribosyl group of 5-phosphorylribose-1-pyrophosphate (PRPP) to anthranilate to yield N-(5'-phosphoribosyl)-anthranilate (PRA). The chain is Anthranilate phosphoribosyltransferase from Polynucleobacter necessarius subsp. necessarius (strain STIR1).